Here is a 301-residue protein sequence, read N- to C-terminus: Ribonuclease Z (301 aa).

Residues H63, H65, D67, H68, H141, D204, and H262 each contribute to the Zn(2+) site. D67 acts as the Proton acceptor in catalysis.

Belongs to the RNase Z family. In terms of assembly, homodimer. The cofactor is Zn(2+).

The catalysed reaction is Endonucleolytic cleavage of RNA, removing extra 3' nucleotides from tRNA precursor, generating 3' termini of tRNAs. A 3'-hydroxy group is left at the tRNA terminus and a 5'-phosphoryl group is left at the trailer molecule.. Zinc phosphodiesterase, which displays some tRNA 3'-processing endonuclease activity. Probably involved in tRNA maturation, by removing a 3'-trailer from precursor tRNA. This is Ribonuclease Z from Streptomyces avermitilis (strain ATCC 31267 / DSM 46492 / JCM 5070 / NBRC 14893 / NCIMB 12804 / NRRL 8165 / MA-4680).